The following is a 389-amino-acid chain: Sinapine esterase (389 aa).

Positions 1–25 (MASSLKKLITSFLLFFFYTIIVASS) are cleaved as a signal peptide. The active-site Nucleophile is serine 41. Residues asparagine 104, asparagine 137, and asparagine 320 are each glycosylated (N-linked (GlcNAc...) asparagine). Residues aspartate 345 and histidine 348 contribute to the active site. Asparagine 372 and asparagine 383 each carry an N-linked (GlcNAc...) asparagine glycan.

Belongs to the 'GDSL' lipolytic enzyme family. In terms of tissue distribution, expressed in most tissues or organs of the mature seedlings. Not expressed in roots of mature seedlings.

The protein resides in the secreted. It catalyses the reaction O-sinapoylcholine + H2O = (E)-sinapate + choline + H(+). Inhibited by PMSF. Functionally, sinapine esterase that catalyzes that hydrolysis of sinapine, releasing choline and sinapate. Sinapine (O-sinapoylcholine) is the predominant phenolic compound in a complex group of sinapate esters in seeds of oilseed rape (B.napus). Sinapine has antinutritive activity and prevents the use of seed protein for food and feed. Shows broad substrate specificity towards various other choline esters, including phosphatidylcholine. The sequence is that of Sinapine esterase from Brassica napus (Rape).